Reading from the N-terminus, the 231-residue chain is Ribose-5-phosphate isomerase A (231 aa).

Substrate-binding positions include 32–35, 85–88, and 98–101; these read TGST, DGAD, and KGGG. Catalysis depends on Glu107, which acts as the Proton acceptor. Lys125 is a binding site for substrate.

The protein belongs to the ribose 5-phosphate isomerase family. In terms of assembly, homodimer.

It carries out the reaction aldehydo-D-ribose 5-phosphate = D-ribulose 5-phosphate. It participates in carbohydrate degradation; pentose phosphate pathway; D-ribose 5-phosphate from D-ribulose 5-phosphate (non-oxidative stage): step 1/1. In terms of biological role, catalyzes the reversible conversion of ribose-5-phosphate to ribulose 5-phosphate. The sequence is that of Ribose-5-phosphate isomerase A from Burkholderia mallei (strain NCTC 10247).